Consider the following 88-residue polypeptide: Elongation factor 1-beta (88 aa).

The protein belongs to the EF-1-beta/EF-1-delta family.

In terms of biological role, promotes the exchange of GDP for GTP in EF-1-alpha/GDP, thus allowing the regeneration of EF-1-alpha/GTP that could then be used to form the ternary complex EF-1-alpha/GTP/AAtRNA. The protein is Elongation factor 1-beta (ef1b) of Thermoplasma volcanium (strain ATCC 51530 / DSM 4299 / JCM 9571 / NBRC 15438 / GSS1).